The following is a 435-amino-acid chain: Cysteine--tRNA ligase (435 aa).

Cys24 is a Zn(2+) binding site. A 'HIGH' region motif is present at residues Pro26–Asn36. Zn(2+) contacts are provided by Cys202, His228, and Glu232. The short motif at Lys260–Ser264 is the 'KMSKS' region element. Residue Lys263 coordinates ATP.

The protein belongs to the class-I aminoacyl-tRNA synthetase family. As to quaternary structure, monomer. Zn(2+) is required as a cofactor.

The protein localises to the cytoplasm. It catalyses the reaction tRNA(Cys) + L-cysteine + ATP = L-cysteinyl-tRNA(Cys) + AMP + diphosphate. The polypeptide is Cysteine--tRNA ligase (Mycoplasmoides gallisepticum (strain R(low / passage 15 / clone 2)) (Mycoplasma gallisepticum)).